A 510-amino-acid polypeptide reads, in one-letter code: 2,3-bisphosphoglycerate-independent phosphoglycerate mutase (510 aa).

A Mn(2+)-binding site is contributed by Asp12. Tyr36 is modified (phosphotyrosine). Residue Ser62 participates in Mn(2+) binding. The Phosphoserine intermediate role is filled by Ser62. Residues His123, 153–154 (RD), Arg185, Arg191, 261–264 (RPDR), and Lys336 each bind substrate. Mn(2+) is bound by residues Asp403, His407, Asp444, His445, and His462.

Belongs to the BPG-independent phosphoglycerate mutase family. In terms of assembly, monomer. The cofactor is Mn(2+).

The catalysed reaction is (2R)-2-phosphoglycerate = (2R)-3-phosphoglycerate. It participates in carbohydrate degradation; glycolysis; pyruvate from D-glyceraldehyde 3-phosphate: step 3/5. Functionally, essential for rapid growth and for sporulation. Catalyzes the interconversion of 2-phosphoglycerate and 3-phosphoglycerate. This chain is 2,3-bisphosphoglycerate-independent phosphoglycerate mutase, found in Shouchella clausii (strain KSM-K16) (Alkalihalobacillus clausii).